The following is a 493-amino-acid chain: Transcript termination protein OPG145 (493 aa).

Residues 100 to 256 enclose the Helicase ATP-binding domain; sequence MIESKRPLYI…NSIINIAKLS (157 aa). 113 to 120 contributes to the ATP binding site; the sequence is LACGFGKT. The DESH box motif lies at 206-209; it reads DESH. A Helicase C-terminal domain is found at 309–456; it reads ILDTLVEEFK…IISLSVDKLG (148 aa).

Belongs to the helicase family. Poxviruses subfamily. Interacts with OPG087. Might be part of a transcription complex composed at least of OPG087, OPG110, and OPG145.

It localises to the virion. DNA helicase which seems to act as a postreplicative transcription termination factor. Involved in ATP-dependent release of nascent RNA. Forms a stable complex with single-stranded DNA, and to a lesser extent RNA. The polypeptide is Transcript termination protein OPG145 (OPG145) (Homo sapiens (Human)).